The sequence spans 368 residues: Flagellar P-ring protein (368 aa).

An N-terminal signal peptide occupies residues 1-22 (MLIPLARAVLALALLGAGAAHA).

It belongs to the FlgI family. In terms of assembly, the basal body constitutes a major portion of the flagellar organelle and consists of four rings (L,P,S, and M) mounted on a central rod.

The protein resides in the periplasm. It is found in the bacterial flagellum basal body. Its function is as follows. Assembles around the rod to form the L-ring and probably protects the motor/basal body from shearing forces during rotation. The polypeptide is Flagellar P-ring protein (Bordetella bronchiseptica (strain ATCC BAA-588 / NCTC 13252 / RB50) (Alcaligenes bronchisepticus)).